The sequence spans 167 residues: Protein archease (167 aa).

A2 carries the post-translational modification N-acetylalanine. D39, D166, and I167 together coordinate Ca(2+).

It belongs to the archease family. As to quaternary structure, component of the tRNA-splicing ligase complex.

Functionally, component of the tRNA-splicing ligase complex required to facilitate the enzymatic turnover of catalytic subunit RTCB. Together with DDX1, acts by facilitating the guanylylation of RTCB, a key intermediate step in tRNA ligation. In Homo sapiens (Human), this protein is Protein archease (ZBTB8OS).